The sequence spans 438 residues: Coenzyme A disulfide reductase (438 aa).

8–33 (GAVAGGATCASQIRRLDKESDIIIFE) provides a ligand contact to FAD. Thr-15, Gln-19, Arg-22, Ser-39, and Asn-42 together coordinate substrate. Residue Cys-43 is the Nucleophile of the active site. Cys-43 functions as the Redox-active in the catalytic mechanism. Lys-71 contacts substrate. 151-166 (VLVVGAGYVSLEVLEN) lines the NADP(+) pocket. Residue 267–277 (TNVPNIYAIGD) coordinates FAD. His-299 lines the substrate pocket. Residue Tyr-419 coordinates FAD. Lys-427 contributes to the substrate binding site.

The protein belongs to the class-III pyridine nucleotide-disulfide oxidoreductase family. In terms of assembly, homodimer. FAD is required as a cofactor.

It carries out the reaction NADP(+) + 2 CoA = CoA-disulfide + NADPH + H(+). Functionally, catalyzes specifically the NADPH-dependent reduction of coenzyme A disulfide. Is also active with other disulfide substrates containing at least one 4'-phosphopantethienyl moiety such as 4,4'-diphosphopantethine, but is not able to reduce oxidized glutathione, cystine, pantethine, or H(2)O(2). This chain is Coenzyme A disulfide reductase (cdr), found in Staphylococcus aureus (strain NCTC 8325 / PS 47).